The primary structure comprises 1963 residues: Myosin-4 (1963 aa).

A Myosin N-terminal SH3-like domain is found at 28–77; it reads DSKKNVWIPDPEEGYLAGEITATKGDQVTIVTARGNEVTLKKELVQEMNP. The Myosin motor domain occupies 81–787; that stretch reads EKTEDMSNLS…VLAHLEDIRD (707 aa). Lys125 carries the N6,N6,N6-trimethyllysine modification. Residue 174-181 coordinates ATP; the sequence is GESGAGKT. Actin-binding stretches follow at residues 662 to 684 and 766 to 780; these read LNNL…IPNE and RIGL…GVLA. The segment at 848-1161 is alpha-helical tailpiece (S2); that stretch reads MLKAGKEAEE…LEELGEKLDE (314 aa). Residues 848–1963 are a coiled coil; it reads MLKAGKEAEE…SPSRARASDF (1116 aa). Composition is skewed to basic and acidic residues over residues 970 to 988 and 1133 to 1146; these read LRKA…RSLQ and NERQ…RAKS. 2 disordered regions span residues 970–990 and 1125–1146; these read LRKA…LQDE and SELE…RAKS. Positions 1162–1173 are hinge; it reads QGGATAAQVEVN. A light meromyosin (LMM) region spans residues 1162 to 1963; that stretch reads QGGATAAQVE…SPSRARASDF (802 aa). 2 disordered regions span residues 1317 to 1336 and 1912 to 1963; these read LTSQ…RERQ and LEDA…ASDF. Basic and acidic residues predominate over residues 1322–1336; that stretch reads EEARRTADEEARERQ.

It belongs to the TRAFAC class myosin-kinesin ATPase superfamily. Myosin family. In terms of assembly, muscle myosin is a hexameric protein that consists of 2 heavy chain subunits (MHC), 2 alkali light chain subunits (MLC) and 2 regulatory light chain subunits (MLC-2). Forms a complex composed of chaperone unc-45, unc-54 and ubiquitin-protein ligase ufd-2; promotes poly-ubiquitination of unfolded unc-54. Within the complex interacts with unc-45 (via UCS domain) and ufd-2. Interacts with itr-1 (via c-terminal coiled coil domain). Post-translationally, unfolded unc-54 is poly-ubiquitinated by ufd-2.

It is found in the cytoplasm. It localises to the myofibril. In terms of biological role, required for muscle contraction. In Caenorhabditis elegans, this protein is Myosin-4 (unc-54).